Here is a 257-residue protein sequence, read N- to C-terminus: Phycoerythrobilin:ferredoxin oxidoreductase (257 aa).

This sequence belongs to the HY2 family.

The enzyme catalyses (3Z)-phycoerythrobilin + oxidized 2[4Fe-4S]-[ferredoxin] = 15,16-dihydrobiliverdin + reduced 2[4Fe-4S]-[ferredoxin] + 2 H(+). Its function is as follows. Catalyzes the two-electron reduction of the C2 and C3(1) diene system of 15,16-dihydrobiliverdin. The polypeptide is Phycoerythrobilin:ferredoxin oxidoreductase (pebB) (Prochlorococcus marinus (strain SARG / CCMP1375 / SS120)).